The chain runs to 408 residues: Neutral cholesterol ester hydrolase 1 (408 aa).

Residues 1–4 (MRSS) lie on the Cytoplasmic side of the membrane. Residues 5–25 (CVLLTALVALAAYYVYIPLPG) traverse the membrane as a helical; Signal-anchor for type II membrane protein segment. The Lumenal segment spans residues 26–408 (SVSDPWKLML…SYIKWLDQNL (383 aa)). An Involved in the stabilization of the negatively charged intermediate by the formation of the oxyanion hole motif is present at residues 113–115 (HGG). S191 is an active-site residue. N-linked (GlcNAc...) asparagine glycosylation is found at N270 and N287. Active-site residues include D348 and H378. N389 carries N-linked (GlcNAc...) asparagine glycosylation.

The protein belongs to the 'GDXG' lipolytic enzyme family. Post-translationally, N-glycosylated.

Its subcellular location is the cell membrane. The protein resides in the microsome. The catalysed reaction is a 1-O-alkyl-2-acetyl-sn-glycerol + H2O = a 1-O-alkyl-sn-glycerol + acetate + H(+). It catalyses the reaction 1-O-hexadecyl-2-acetyl-sn-glycerol + H2O = 1-O-hexadecyl-sn-glycerol + acetate + H(+). It carries out the reaction a cholesterol ester + H2O = cholesterol + a fatty acid + H(+). The enzyme catalyses cholesteryl (9Z-octadecenoate) + H2O = cholesterol + (9Z)-octadecenoate + H(+). Hydrolyzes 2-acetyl monoalkylglycerol ether (1-O-alkyl-2-acetyl-sn-glycerol), the penultimate precursor of the pathway for de novo synthesis of platelet-activating factor. May be responsible for the hydrolysis of cholesterol esters (such as cholesteryl (9Z-octadecenoate)) in macrophages. Also involved in organ detoxification by hydrolyzing exogenous organophosphorus compounds. This chain is Neutral cholesterol ester hydrolase 1 (NCEH1), found in Pongo abelii (Sumatran orangutan).